Here is a 193-residue protein sequence, read N- to C-terminus: Probable gluconokinase (193 aa).

18–25 (GTAGTGKS) is an ATP binding site.

It belongs to the gluconokinase GntK/GntV family.

The protein localises to the cytoplasm. The enzyme catalyses D-gluconate + ATP = 6-phospho-D-gluconate + ADP + H(+). It participates in carbohydrate acid metabolism; D-gluconate degradation. This chain is Probable gluconokinase, found in Saccharomyces cerevisiae (strain ATCC 204508 / S288c) (Baker's yeast).